A 228-amino-acid polypeptide reads, in one-letter code: Large ribosomal subunit protein bL25 (228 aa).

The interval 198–228 (AAIAEAQSAEAAEEKAEAEAEATNEKNDTEE) is disordered. Residues 209 to 228 (AEEKAEAEAEATNEKNDTEE) are compositionally biased toward basic and acidic residues.

This sequence belongs to the bacterial ribosomal protein bL25 family. CTC subfamily. In terms of assembly, part of the 50S ribosomal subunit; part of the 5S rRNA/L5/L18/L25 subcomplex. Contacts the 5S rRNA. Binds to the 5S rRNA independently of L5 and L18.

In terms of biological role, this is one of the proteins that binds to the 5S RNA in the ribosome where it forms part of the central protuberance. In Methylorubrum populi (strain ATCC BAA-705 / NCIMB 13946 / BJ001) (Methylobacterium populi), this protein is Large ribosomal subunit protein bL25.